Reading from the N-terminus, the 399-residue chain is Methylthioribose kinase (399 aa).

ATP is bound by residues Asn40, Lys57, and 111–113 (EDL). Residue Asp229 participates in substrate binding. 246–248 (DAE) contacts ATP. Arg344 serves as a coordination point for substrate.

This sequence belongs to the methylthioribose kinase family. In terms of assembly, homodimer.

It catalyses the reaction 5-(methylsulfanyl)-D-ribose + ATP = 5-(methylsulfanyl)-alpha-D-ribose 1-phosphate + ADP + H(+). It functions in the pathway amino-acid biosynthesis; L-methionine biosynthesis via salvage pathway; S-methyl-5-thio-alpha-D-ribose 1-phosphate from S-methyl-5'-thioadenosine (hydrolase route): step 2/2. Catalyzes the phosphorylation of methylthioribose into methylthioribose-1-phosphate. The polypeptide is Methylthioribose kinase (Erwinia tasmaniensis (strain DSM 17950 / CFBP 7177 / CIP 109463 / NCPPB 4357 / Et1/99)).